A 493-amino-acid polypeptide reads, in one-letter code: BICD family-like cargo adapter 2 (493 aa).

2 coiled-coil regions span residues 56 to 275 (ELGK…ELHM) and 365 to 431 (MQHV…LLST).

This sequence belongs to the BICDR family.

This is BICD family-like cargo adapter 2 (bicdl2) from Xenopus laevis (African clawed frog).